A 256-amino-acid polypeptide reads, in one-letter code: 5'-nucleotidase SurE (256 aa).

The a divalent metal cation site is built by Asp-9, Asp-10, Ser-42, and Asn-99.

Belongs to the SurE nucleotidase family. Requires a divalent metal cation as cofactor.

Its subcellular location is the cytoplasm. The enzyme catalyses a ribonucleoside 5'-phosphate + H2O = a ribonucleoside + phosphate. Its function is as follows. Nucleotidase that shows phosphatase activity on nucleoside 5'-monophosphates. The chain is 5'-nucleotidase SurE from Symbiobacterium thermophilum (strain DSM 24528 / JCM 14929 / IAM 14863 / T).